The chain runs to 166 residues: Phospholipase A2 inhibitor clone 04 (166 aa).

The signal sequence occupies residues 1 to 19 (MRLILLSSLLLLGIFLANG). A C-type lectin domain is found at 46–161 (LKDAFLTVHR…CDDNRLVVCE (116 aa)). 2 disulfide bridges follow: cysteine 83/cysteine 160 and cysteine 138/cysteine 152. N-linked (GlcNAc...) asparagine glycosylation is present at asparagine 122.

Belongs to the alpha-type phospholipase A2 inhibitor family. As to quaternary structure, homotrimer; non-covalently linked. Expressed by the liver.

The protein localises to the secreted. Its function is as follows. This phospholipase A2 inhibitor binds directly phospholipase A2 in the presence or absence of calcium. The sequence is that of Phospholipase A2 inhibitor clone 04 from Bothrops moojeni (Lance-headed viper).